Consider the following 279-residue polypeptide: Phosphonates import ATP-binding protein PhnC (279 aa).

The ABC transporter domain occupies 2–245 (FQLKNVTRQF…AVAAIYGAET (244 aa)). 34–41 (GRSGAGKS) contributes to the ATP binding site.

It belongs to the ABC transporter superfamily. Phosphonates importer (TC 3.A.1.9.1) family. In terms of assembly, the complex is composed of two ATP-binding proteins (PhnC), two transmembrane proteins (PhnE) and a solute-binding protein (PhnD).

It localises to the cell inner membrane. It carries out the reaction phosphonate(out) + ATP + H2O = phosphonate(in) + ADP + phosphate + H(+). Functionally, part of the ABC transporter complex PhnCDE involved in phosphonates import. Responsible for energy coupling to the transport system. The chain is Phosphonates import ATP-binding protein PhnC from Rhizobium meliloti (strain 1021) (Ensifer meliloti).